A 228-amino-acid polypeptide reads, in one-letter code: Ras-related protein Rab-32D (228 aa).

A GTP-binding site is contributed by 16-23 (GDVNVGKT). The Effector region motif lies at 38–46 (YKSTIGADF). GTP-binding positions include 64–68 (DTAGQ) and 128–131 (NKSD). A disordered region spans residues 183 to 228 (SDNEQFNDSPDEETSSITLLGTSKKHDNTNPNKPSTSSPSSCFNCK). Residues 185–196 (NEQFNDSPDEET) are compositionally biased toward acidic residues. Over residues 211–228 (TNPNKPSTSSPSSCFNCK) the composition is skewed to low complexity. Cys224 carries S-geranylgeranyl cysteine lipidation.

Belongs to the small GTPase superfamily. Rab family.

This chain is Ras-related protein Rab-32D (rab32D), found in Dictyostelium discoideum (Social amoeba).